A 380-amino-acid polypeptide reads, in one-letter code: Actin-like protein arp10 (380 aa).

This sequence belongs to the actin family. ARP10 subfamily.

The protein resides in the cytoplasm. The protein localises to the cytoskeleton. It localises to the nucleus. This is Actin-like protein arp10 (arp10) from Schizosaccharomyces pombe (strain 972 / ATCC 24843) (Fission yeast).